Reading from the N-terminus, the 952-residue chain is Disintegrin and metalloproteinase domain-containing protein adm-2 (952 aa).

Topologically, residues 1-672 (MTDTLDLKLS…NEAYRFRGIT (672 aa)) are extracellular. N-linked (GlcNAc...) asparagine glycosylation is found at Asn125 and Asn301. Residues 177–373 (RFVELALVAD…GIDLCLFNEP (197 aa)) enclose the Peptidase M12B domain. Intrachain disulfides connect Cys287/Cys368, Cys330/Cys352, and Cys332/Cys337. Zn(2+) is bound at residue His312. Residue Glu313 is part of the active site. Residues His316 and His322 each coordinate Zn(2+). Residues 379-466 (DAKCGNGIVE…DCPADFFVQN (88 aa)) form the Disintegrin domain. Asn406 carries an N-linked (GlcNAc...) asparagine glycan. 4 disulfide bridges follow: Cys438–Cys458, Cys624–Cys634, Cys628–Cys640, and Cys642–Cys651. The EGF-like domain maps to 620 to 652 (VTAQCLDNCNFRGVCNNVGNCHCERGFGGIACE). The chain crosses the membrane as a helical span at residues 673 to 693 (LSSTFLVFFCLFGIFIGGLCV). Topologically, residues 694-952 (YYRVKRKRNL…AAIFDQKLKK (259 aa)) are cytoplasmic. Disordered stretches follow at residues 778 to 809 (IPMV…ERAT) and 829 to 938 (SFNT…EKVD). Basic and acidic residues-rich tracts occupy residues 798-809 (AEKEEQNQERAT) and 849-873 (PSDD…DRLN). Over residues 905-914 (QAPPPPPPAH) the composition is skewed to pro residues. A compositionally biased stretch (basic and acidic residues) spans 925–938 (KVSEDAAATEEKVD).

Zn(2+) is required as a cofactor. As to expression, expressed in hyp7 large epidermal syncytium (punctate distribution), seam cell syncytia, anterior epidermis, neurons located in the head, tail and central body, proximal oogenic cells (levels increasing in maturing oocytes) and myoepithelial cells of the spermatheca (at protein level). Not detected in mature sperm cells.

It localises to the cell membrane. The protein localises to the endosome membrane. The protein resides in the lysosome membrane. In terms of biological role, metalloprotease that cleaves and releases a number of molecules. Negative regulator of lrp-1 protein levels, potentially by influencing its endosomal trafficking. Involved in regulating the molting process. The chain is Disintegrin and metalloproteinase domain-containing protein adm-2 from Caenorhabditis elegans.